We begin with the raw amino-acid sequence, 143 residues long: Large ribosomal subunit protein uL13 (143 aa).

Belongs to the universal ribosomal protein uL13 family. Part of the 50S ribosomal subunit.

This protein is one of the early assembly proteins of the 50S ribosomal subunit, although it is not seen to bind rRNA by itself. It is important during the early stages of 50S assembly. The polypeptide is Large ribosomal subunit protein uL13 (Desulfitobacterium hafniense (strain DSM 10664 / DCB-2)).